Reading from the N-terminus, the 131-residue chain is Ribonuclease VapC42 (131 aa).

The region spanning 1–125 (MIVDTSAIVA…FRGDDFTHTD (125 aa)) is the PINc domain. Mg(2+) is bound by residues aspartate 4 and aspartate 100.

It belongs to the PINc/VapC protein family. Requires Mg(2+) as cofactor.

Its function is as follows. Toxic component of a type II toxin-antitoxin (TA) system. An RNase. Its cognate antitoxin is VapB42. The sequence is that of Ribonuclease VapC42 from Mycobacterium tuberculosis (strain CDC 1551 / Oshkosh).